Reading from the N-terminus, the 483-residue chain is Cytochrome P450 71A23 (483 aa).

A helical membrane pass occupies residues 1–21; it reads MILFLCLIILFIITILFFKKH. Cys-429 is a heme binding site.

The protein belongs to the cytochrome P450 family. The cofactor is heme.

It localises to the membrane. The sequence is that of Cytochrome P450 71A23 (CYP71A23) from Arabidopsis thaliana (Mouse-ear cress).